A 972-amino-acid polypeptide reads, in one-letter code: 116 kDa U5 small nuclear ribonucleoprotein component (972 aa).

Methionine 1 is modified (N-acetylmethionine). The interval 1 to 54 (MDTDLYDEFGNYIGPELDSDEDDDELGRETKDLDEMDDDDDDDDVGDHDDDHPG) is disordered. 2 stretches are compositionally biased toward acidic residues: residues 17 to 26 (LDSDEDDDEL) and 34 to 48 (DEMDDDDDDDDVGDH). Serine 19 carries the phosphoserine modification. Lysine 64 participates in a covalent cross-link: Glycyl lysine isopeptide (Lys-Gly) (interchain with G-Cter in SUMO1); alternate. Lysine 64 participates in a covalent cross-link: Glycyl lysine isopeptide (Lys-Gly) (interchain with G-Cter in SUMO2); alternate. A Phosphothreonine modification is found at threonine 86. The region spanning 127–409 (ELIRNVTLCG…GIHLTKEELK (283 aa)) is the tr-type G domain. Residues 136–143 (GHLHHGKT), 204–208 (DTPGH), and 258–261 (NKID) contribute to the GTP site.

Belongs to the TRAFAC class translation factor GTPase superfamily. Classic translation factor GTPase family. EF-G/EF-2 subfamily. As to quaternary structure, component of the U5 snRNP and the U4/U6-U5 tri-snRNP complex, a building block of the spliceosome. The U4/U6-U5 tri-snRNP complex is composed of the U4, U6 and U5 snRNAs and at least PRPF3, PRPF4, PRPF6, PRPF8, PRPF31, SNRNP200, TXNL4A, SNRNP40, DDX23, CD2BP2, PPIH, SNU13, EFTUD2, SART1 and USP39. Component of the pre-catalytic, catalytic and post-catalytic spliceosome complexes. Component of the minor spliceosome, which splices U12-type introns. Within this complex, interacts with CRIPT. Interacts with ERBB4 and PRPF8. Interacts with PIH1D1. Interacts with RPAP3 and URI1 in a ZNHIT2-dependent manner. Interacts with NRDE2. Interacts with FAM50A. Interacts with UBL5.

Its subcellular location is the nucleus. Required for pre-mRNA splicing as component of the spliceosome, including pre-catalytic, catalytic and post-catalytic spliceosomal complexes. Component of the U5 snRNP and the U4/U6-U5 tri-snRNP complex, a building block of the spliceosome. As a component of the minor spliceosome, involved in the splicing of U12-type introns in pre-mRNAs. This chain is 116 kDa U5 small nuclear ribonucleoprotein component (EFTUD2), found in Homo sapiens (Human).